A 275-amino-acid chain; its full sequence is Large ribosomal subunit protein uL2 (275 aa).

2 disordered regions span residues 1-24 (MGIRSFRPYTPGTRQATVSDFSEI) and 208-275 (AGRT…RRRR). The segment covering 12–22 (GTRQATVSDFS) has biased composition (polar residues). 2 stretches are compositionally biased toward basic residues: residues 208 to 219 (AGRTRHLGRRPQ) and 255 to 275 (LGKKTRKKKKQSSSLIVRRRR).

Belongs to the universal ribosomal protein uL2 family. Part of the 50S ribosomal subunit. Forms a bridge to the 30S subunit in the 70S ribosome.

Functionally, one of the primary rRNA binding proteins. Required for association of the 30S and 50S subunits to form the 70S ribosome, for tRNA binding and peptide bond formation. It has been suggested to have peptidyltransferase activity; this is somewhat controversial. Makes several contacts with the 16S rRNA in the 70S ribosome. The protein is Large ribosomal subunit protein uL2 of Picosynechococcus sp. (strain ATCC 27264 / PCC 7002 / PR-6) (Agmenellum quadruplicatum).